Here is a 269-residue protein sequence, read N- to C-terminus: Nuclear egress protein 2 (269 aa).

Over 1 to 247 the chain is Perinuclear space; it reads MSRRTYVRSE…VWKLALPVAN (247 aa). Residues 248-268 form a helical membrane-spanning segment; sequence VTYALFIVIVLVVVLGAVLFW. Residue Lys-269 is a topological domain, nuclear.

This sequence belongs to the herpesviridae NEC2 protein family. As to quaternary structure, forms a heterohexameric complex with NEC1. Phosphorylated.

It is found in the host nucleus inner membrane. Plays an essential role in virion nuclear egress, the first step of virion release from infected cell. Within the host nucleus, NEC1 interacts with the newly formed capsid through the vertexes and directs it to the inner nuclear membrane by associating with NEC2. Induces the budding of the capsid at the inner nuclear membrane as well as its envelopment into the perinuclear space. There, the NEC1/NEC2 complex promotes the fusion of the enveloped capsid with the outer nuclear membrane and the subsequent release of the viral capsid into the cytoplasm where it will reach the secondary budding sites in the host Golgi or trans-Golgi network. This is Nuclear egress protein 2 from Homo sapiens (Human).